Consider the following 341-residue polypeptide: S-adenosylmethionine:tRNA ribosyltransferase-isomerase (341 aa).

It belongs to the QueA family. Monomer.

The protein localises to the cytoplasm. The enzyme catalyses 7-aminomethyl-7-carbaguanosine(34) in tRNA + S-adenosyl-L-methionine = epoxyqueuosine(34) in tRNA + adenine + L-methionine + 2 H(+). It participates in tRNA modification; tRNA-queuosine biosynthesis. Its function is as follows. Transfers and isomerizes the ribose moiety from AdoMet to the 7-aminomethyl group of 7-deazaguanine (preQ1-tRNA) to give epoxyqueuosine (oQ-tRNA). This is S-adenosylmethionine:tRNA ribosyltransferase-isomerase from Staphylococcus aureus (strain Mu3 / ATCC 700698).